The sequence spans 474 residues: Dihydrolipoyl dehydrogenase (474 aa).

Residues 34-42 (EKEKLGGTC), Lys-51, and Gly-114 contribute to the FAD site. A disulfide bridge links Cys-42 with Cys-47. NAD(+)-binding positions include 188–192 (GGGVI), Glu-211, Val-245, and 278–281 (SIGR). FAD contacts are provided by Asp-320 and Ala-328. His-453 (proton acceptor) is an active-site residue.

Belongs to the class-I pyridine nucleotide-disulfide oxidoreductase family. As to quaternary structure, homodimer. FAD is required as a cofactor.

The protein resides in the cytoplasm. It carries out the reaction N(6)-[(R)-dihydrolipoyl]-L-lysyl-[protein] + NAD(+) = N(6)-[(R)-lipoyl]-L-lysyl-[protein] + NADH + H(+). In terms of biological role, the branched-chain alpha-keto dehydrogenase complex catalyzes the overall conversion of alpha-keto acids to acyl-CoA and CO(2). It contains multiple copies of 3 enzymatic components: branched-chain alpha-keto acid decarboxylase (E1), lipoamide acyltransferase (E2) and lipoamide dehydrogenase (E3). This is Dihydrolipoyl dehydrogenase (bfmBC) from Bacillus subtilis (strain 168).